Consider the following 225-residue polypeptide: Probable methylthioribulose-1-phosphate dehydratase (225 aa).

Substrate is bound at residue cysteine 86. Zn(2+) is bound by residues histidine 104 and histidine 106. Glutamate 127 functions as the Proton donor/acceptor in the catalytic mechanism. Histidine 183 provides a ligand contact to Zn(2+).

Belongs to the aldolase class II family. MtnB subfamily. Requires Zn(2+) as cofactor.

It localises to the cytoplasm. The enzyme catalyses 5-(methylsulfanyl)-D-ribulose 1-phosphate = 5-methylsulfanyl-2,3-dioxopentyl phosphate + H2O. It participates in amino-acid biosynthesis; L-methionine biosynthesis via salvage pathway; L-methionine from S-methyl-5-thio-alpha-D-ribose 1-phosphate: step 2/6. Its function is as follows. Catalyzes the dehydration of methylthioribulose-1-phosphate (MTRu-1-P) into 2,3-diketo-5-methylthiopentyl-1-phosphate (DK-MTP-1-P). The sequence is that of Probable methylthioribulose-1-phosphate dehydratase from Leishmania infantum.